Reading from the N-terminus, the 541-residue chain is MVCLAAFSAQAAETKKVDVLLVGGGIMSSTLGVWLHELEPDWSMMMVERLDGVAQESSNGWNNAGTGHSALAELNYTPEKSNGKIDISKAVEINEGFQVTRQFWTYQVKTGVLKNPRSFINSTPHMSFVWGEDNVRYLKKRYEALQASPLFRGMQFSDDYDQISKWVPLMMEGRDRSQKVAATWMPVGTDVNFGEITRQFVGYLQSQPQFTLSLSSEVRDIKRNDDGTWRVSYVNLKSGDRQDVDTKFLFIGAGGGALRLLQASGIPEARDFAAFPVGGSFLVTENPEVVNRHLAKAYGKASVGSPPMSVPHLDTRVIDGKRIILFGPFATFSTKFLKNGSYMDLFGSTTSHNVMPMLHVGVDEFPLVQYLAGQLMLSDEDRFNALKEYFPLAKKEDWRLWQAGQRVQIIQRDEAKGGILKLGTQIVKSKDGTIAGLLGASPGASTAAPIMLGVLETVFKDKLATPAWQQKVRQMIPTYGIKLNDNPAKVYEEWVATAEALQLSPPPRIDLRVTPAAPAAKPAAGAAQQAKPAKATADIAL.

The disordered stretch occupies residues 520-541 (AKPAAGAAQQAKPAKATADIAL).

This sequence belongs to the MQO family. It depends on FAD as a cofactor.

The enzyme catalyses (S)-malate + a quinone = a quinol + oxaloacetate. It participates in carbohydrate metabolism; tricarboxylic acid cycle; oxaloacetate from (S)-malate (quinone route): step 1/1. This chain is Probable malate:quinone oxidoreductase, found in Ralstonia nicotianae (strain ATCC BAA-1114 / GMI1000) (Ralstonia solanacearum).